Here is a 319-residue protein sequence, read N- to C-terminus: Acetyl esterase (319 aa).

The short motif at 91 to 93 (HGG) is the Involved in the stabilization of the negatively charged intermediate by the formation of the oxyanion hole element. Residues S165, D262, and H292 contribute to the active site.

Belongs to the 'GDXG' lipolytic enzyme family. As to quaternary structure, homodimer. Interacts with MalT and MelA.

The protein localises to the cytoplasm. Its function is as follows. Displays esterase activity towards short chain fatty esters (acyl chain length of up to 8 carbons). Able to hydrolyze triacetylglycerol (triacetin) and tributyrylglycerol (tributyrin), but not trioleylglycerol (triolein) or cholesterol oleate. Negatively regulates MalT activity by antagonizing maltotriose binding. Inhibits MelA galactosidase activity. The chain is Acetyl esterase from Escherichia coli O8 (strain IAI1).